Here is a 159-residue protein sequence, read N- to C-terminus: Ribosomal RNA large subunit methyltransferase H (159 aa).

S-adenosyl-L-methionine-binding positions include Leu76, Gly108, and 127 to 132 (FSKMTF).

It belongs to the RNA methyltransferase RlmH family. As to quaternary structure, homodimer.

It localises to the cytoplasm. It carries out the reaction pseudouridine(1915) in 23S rRNA + S-adenosyl-L-methionine = N(3)-methylpseudouridine(1915) in 23S rRNA + S-adenosyl-L-homocysteine + H(+). In terms of biological role, specifically methylates the pseudouridine at position 1915 (m3Psi1915) in 23S rRNA. The polypeptide is Ribosomal RNA large subunit methyltransferase H (Geobacillus thermodenitrificans (strain NG80-2)).